We begin with the raw amino-acid sequence, 256 residues long: MAAPWVSLRLVAPMWNGTRGIHRLGGAVVPEGNQKKERKMLQFLNNHFYDVEALRGYLLQREMSKVHLKNRSFTWLEEQHGPYSAGAFFILKQGGAVKFRDKEWIRPDKYGHFSPEFWNFREVPVEAVDASDCEINYEGLDNLLLLKELQSLSLQRCPHVDDWCLSRLYPLADSLQELSLAGCPRVSERGLACLHHLQNLRRLDISDLPAVSNPGLTQILVEEMLPNCQVVGVDWAEGLKLGPEERPQDTASPVPA.

A Phosphoserine modification is found at S252.

This sequence belongs to the ATP synthase subunit s family. In terms of assembly, interacts with incompletely assembled mitochondrial NADH:ubiquinone oxidoreductase complex (complex I).

It is found in the mitochondrion. Functionally, required for the assembly of the mitochondrial NADH:ubiquinone oxidoreductase complex (complex I). Involved in the assembly of the distal region of complex I. This is Distal membrane-arm assembly complex protein 2 from Macaca fascicularis (Crab-eating macaque).